The chain runs to 35 residues: Conotoxin M11.2 (35 aa).

4 disulfide bridges follow: Cys2/Cys16, Cys9/Cys21, Cys15/Cys26, and Cys20/Cys33.

It belongs to the conotoxin I1 superfamily. As to expression, expressed by the venom duct.

The protein localises to the secreted. In Conus magus (Magical cone), this protein is Conotoxin M11.2.